We begin with the raw amino-acid sequence, 240 residues long: 2,3,4,5-tetrahydropyridine-2,6-dicarboxylate N-acetyltransferase (240 aa).

It belongs to the transferase hexapeptide repeat family. DapH subfamily.

It carries out the reaction (S)-2,3,4,5-tetrahydrodipicolinate + acetyl-CoA + H2O = L-2-acetamido-6-oxoheptanedioate + CoA. Its pathway is amino-acid biosynthesis; L-lysine biosynthesis via DAP pathway; LL-2,6-diaminopimelate from (S)-tetrahydrodipicolinate (acetylase route): step 1/3. Functionally, catalyzes the transfer of an acetyl group from acetyl-CoA to tetrahydrodipicolinate. This Bacillus anthracis (strain A0248) protein is 2,3,4,5-tetrahydropyridine-2,6-dicarboxylate N-acetyltransferase.